The following is a 585-amino-acid chain: Optineurin (585 aa).

The segment at Met1–Leu32 is disordered. Positions Ser16–Ser25 are enriched in polar residues. Residues Glu38 to Ser181 are a coiled coil. Residues Met58–Met220 form an interaction with Rab8 region. The short motif at Asp187 to Ile192 is the LIR element. Residues Ser188 and Ser209 each carry the phosphoserine modification. Disordered regions lie at residues Glu200–Met220 and Phe269–Val299. The stretch at Cys244–Asp512 forms a coiled coil. Ser346 is subject to Phosphoserine. The interval Thr415–Ile585 is interaction with HD. The interaction with MYO6 stretch occupies residues Lys416–Arg525. Residues Asp478–Arg483 carry the UBAN motif. The residue at position 531 (Ser531) is a Phosphoserine. A CCHC NOA-type zinc finger spans residues Pro555 to Ile585. Zn(2+) contacts are provided by Cys563, Cys566, His579, and Cys583.

In terms of assembly, self-associates. Interacts with HD. Interacts with GTF3A. Interacts with MYO6. Interacts (via UBAN) with ubiquitinated TFRC. Interacts with GTP-bound Rab8 (RAB8A and/or RAB8B). Interacts with TBC1D17. Interacts with TBK1. Interacts with TRAF3. Binds to linear ubiquitin chains. Interacts with LC3 family members MAP1LC3A, MAP1LC3B, GABARAP, GABARAPL1 and GABARAPL2; OPTN phosphorylation increases the association (at least with MAP1LC3B). Interacts with RAB12; the interaction may be indirect. Interacts with TBK1; this interaction leads to the Golgi localization of TBK1 and its subsequent activation. Interacts with palmitoyltransferase ZDHHC17/HIP14; the interaction does not lead to palmitoylation of OPTN. Interacts with CYLD. Interacts with TOM1; the interaction is indirect and is mediated by MYO6, which acts as a bridge between TOM1 and OPTN. Interacts with USP12; the interaction is independent of USP12 deubiquitinase activity and may be involved in regulation of autophagic flux. In terms of processing, phosphorylated by TBK1, leading to restrict bacterial proliferation in case of infection.

The protein resides in the cytoplasm. It localises to the perinuclear region. The protein localises to the golgi apparatus. Its subcellular location is the trans-Golgi network. It is found in the cytoplasmic vesicle. The protein resides in the autophagosome. It localises to the recycling endosome. In terms of biological role, plays an important role in the maintenance of the Golgi complex, in membrane trafficking, in exocytosis, through its interaction with myosin VI and Rab8. Links myosin VI to the Golgi complex and plays an important role in Golgi ribbon formation. Negatively regulates the induction of IFNB in response to RNA virus infection. Plays a neuroprotective role in the eye and optic nerve. Probably part of the TNF-alpha signaling pathway that can shift the equilibrium toward induction of cell death. May act by regulating membrane trafficking and cellular morphogenesis via a complex that contains Rab8 and huntingtin (HD). Mediates the interaction of Rab8 with the probable GTPase-activating protein TBC1D17 during Rab8-mediated endocytic trafficking, such as that of transferrin receptor (TFRC/TfR); regulates Rab8 recruitment to tubules emanating from the endocytic recycling compartment. Autophagy receptor that interacts directly with both the cargo to become degraded and an autophagy modifier of the MAP1 LC3 family; targets ubiquitin-coated bacteria (xenophagy) and appears to function in the same pathway as SQSTM1 and CALCOCO2/NDP52. The chain is Optineurin (Optn) from Rattus norvegicus (Rat).